The primary structure comprises 76 residues: Protein CsbA (76 aa).

Residues 1-5 (MITKA) are Extracellular-facing. The helical transmembrane segment at 6 to 22 (VFALFFPFMLVVLFTRV) threads the bilayer. At 23 to 27 (TFNHY) the chain is on the cytoplasmic side. A helical transmembrane segment spans residues 28–44 (VAIALTAALLFASYLKG). At 45 to 49 (YTETY) the chain is on the extracellular side. The chain crosses the membrane as a helical span at residues 50-66 (FIVGLDVVSLVAGGLYM). The Cytoplasmic portion of the chain corresponds to 67-76 (AKKAAEKKEE).

The protein resides in the cell membrane. This chain is Protein CsbA (csbA), found in Bacillus subtilis (strain 168).